The following is a 381-amino-acid chain: Queuine tRNA-ribosyltransferase (381 aa).

The Proton acceptor role is filled by Asp-96. Substrate contacts are provided by residues 96 to 100, Asp-150, Gln-193, and Gly-220; that span reads DSGGF. The RNA binding stretch occupies residues 251–257; it reads GVGSPDS. Asp-270 functions as the Nucleophile in the catalytic mechanism. Residues 275–279 form an RNA binding; important for wobble base 34 recognition region; sequence TRIAR. The Zn(2+) site is built by Cys-308, Cys-310, Cys-313, and His-339.

This sequence belongs to the queuine tRNA-ribosyltransferase family. Homodimer. Within each dimer, one monomer is responsible for RNA recognition and catalysis, while the other monomer binds to the replacement base PreQ1. It depends on Zn(2+) as a cofactor.

It carries out the reaction 7-aminomethyl-7-carbaguanine + guanosine(34) in tRNA = 7-aminomethyl-7-carbaguanosine(34) in tRNA + guanine. It functions in the pathway tRNA modification; tRNA-queuosine biosynthesis. Functionally, catalyzes the base-exchange of a guanine (G) residue with the queuine precursor 7-aminomethyl-7-deazaguanine (PreQ1) at position 34 (anticodon wobble position) in tRNAs with GU(N) anticodons (tRNA-Asp, -Asn, -His and -Tyr). Catalysis occurs through a double-displacement mechanism. The nucleophile active site attacks the C1' of nucleotide 34 to detach the guanine base from the RNA, forming a covalent enzyme-RNA intermediate. The proton acceptor active site deprotonates the incoming PreQ1, allowing a nucleophilic attack on the C1' of the ribose to form the product. After dissociation, two additional enzymatic reactions on the tRNA convert PreQ1 to queuine (Q), resulting in the hypermodified nucleoside queuosine (7-(((4,5-cis-dihydroxy-2-cyclopenten-1-yl)amino)methyl)-7-deazaguanosine). This is Queuine tRNA-ribosyltransferase from Bacillus licheniformis (strain ATCC 14580 / DSM 13 / JCM 2505 / CCUG 7422 / NBRC 12200 / NCIMB 9375 / NCTC 10341 / NRRL NRS-1264 / Gibson 46).